We begin with the raw amino-acid sequence, 207 residues long: 3-demethoxyubiquinol 3-hydroxylase (207 aa).

A compositionally biased stretch (basic and acidic residues) spans 22–32; it reads ERANPADRLAP. Positions 22 to 41 are disordered; the sequence is ERANPADRLAPETEQMNPEE. 6 residues coordinate Fe cation: Glu56, Glu86, His89, Glu138, Glu170, and His173.

Belongs to the COQ7 family. Fe cation serves as cofactor.

It localises to the cell membrane. It catalyses the reaction a 5-methoxy-2-methyl-3-(all-trans-polyprenyl)benzene-1,4-diol + AH2 + O2 = a 3-demethylubiquinol + A + H2O. Its pathway is cofactor biosynthesis; ubiquinone biosynthesis. Its function is as follows. Catalyzes the hydroxylation of 2-nonaprenyl-3-methyl-6-methoxy-1,4-benzoquinol during ubiquinone biosynthesis. This is 3-demethoxyubiquinol 3-hydroxylase from Cupriavidus metallidurans (strain ATCC 43123 / DSM 2839 / NBRC 102507 / CH34) (Ralstonia metallidurans).